The chain runs to 30 residues: Trypsin inhibitor 3 (30 aa).

3 disulfides stabilise this stretch: C4–C21, C11–C23, and C17–C29.

This sequence belongs to the protease inhibitor I7 (squash-type serine protease inhibitor) family.

Its subcellular location is the secreted. Inhibits lysyl endopeptidase and trypsin. The protein is Trypsin inhibitor 3 of Cucumis melo var. conomon (Oriental pickling melon).